Here is a 140-residue protein sequence, read N- to C-terminus: Perlin matrix protein (140 aa).

An N-terminal signal peptide occupies residues Met1–Ala26.

It belongs to the N16 matrix protein family. As to quaternary structure, heterooligomer; disulfide-linked. Pif97, Pif80, N16 and other proteins form a complex. As to expression, component of conchiolin, the organic matrix of nacre. Only expressed in the dorsal region of the mantle.

The protein resides in the secreted. It is found in the extracellular space. It localises to the extracellular matrix. Functionally, may be specifically involved in the formation of the nacreous layer. The polypeptide is Perlin matrix protein (Margaritifera margaritifera (Freshwater pearl mussel)).